Reading from the N-terminus, the 373-residue chain is Anhydro-N-acetylmuramic acid kinase (373 aa).

12 to 19 provides a ligand contact to ATP; it reads GTSLDGVD.

It belongs to the anhydro-N-acetylmuramic acid kinase family.

It catalyses the reaction 1,6-anhydro-N-acetyl-beta-muramate + ATP + H2O = N-acetyl-D-muramate 6-phosphate + ADP + H(+). It functions in the pathway amino-sugar metabolism; 1,6-anhydro-N-acetylmuramate degradation. Its pathway is cell wall biogenesis; peptidoglycan recycling. In terms of biological role, catalyzes the specific phosphorylation of 1,6-anhydro-N-acetylmuramic acid (anhMurNAc) with the simultaneous cleavage of the 1,6-anhydro ring, generating MurNAc-6-P. Is required for the utilization of anhMurNAc either imported from the medium or derived from its own cell wall murein, and thus plays a role in cell wall recycling. The protein is Anhydro-N-acetylmuramic acid kinase of Salmonella agona (strain SL483).